Consider the following 403-residue polypeptide: Phosphopentomutase (403 aa).

The Mn(2+) site is built by Asp13, Asp298, His303, Asp339, His340, and His351.

The protein belongs to the phosphopentomutase family. Requires Mn(2+) as cofactor.

It localises to the cytoplasm. It catalyses the reaction 2-deoxy-alpha-D-ribose 1-phosphate = 2-deoxy-D-ribose 5-phosphate. The enzyme catalyses alpha-D-ribose 1-phosphate = D-ribose 5-phosphate. The protein operates within carbohydrate degradation; 2-deoxy-D-ribose 1-phosphate degradation; D-glyceraldehyde 3-phosphate and acetaldehyde from 2-deoxy-alpha-D-ribose 1-phosphate: step 1/2. Its function is as follows. Isomerase that catalyzes the conversion of deoxy-ribose 1-phosphate (dRib-1-P) and ribose 1-phosphate (Rib-1-P) to deoxy-ribose 5-phosphate (dRib-5-P) and ribose 5-phosphate (Rib-5-P), respectively. In Streptococcus pneumoniae serotype 19F (strain G54), this protein is Phosphopentomutase.